A 330-amino-acid chain; its full sequence is ADP-L-glycero-D-manno-heptose-6-epimerase (330 aa).

NADP(+)-binding positions include 10–11 (FI), 31–32 (DD), Lys38, Lys53, 74–78 (QGACS), and Asn91. Tyr138 acts as the Proton acceptor in catalysis. Lys142 provides a ligand contact to NADP(+). Asn167 is a binding site for substrate. Residues Val168 and Lys176 each coordinate NADP(+). Lys176 (proton acceptor) is an active-site residue. Residues Arg178, His185, 199–202 (FAGW), Arg212, and Tyr291 contribute to the substrate site.

It belongs to the NAD(P)-dependent epimerase/dehydratase family. HldD subfamily. Homopentamer. Requires NADP(+) as cofactor.

The enzyme catalyses ADP-D-glycero-beta-D-manno-heptose = ADP-L-glycero-beta-D-manno-heptose. Its pathway is nucleotide-sugar biosynthesis; ADP-L-glycero-beta-D-manno-heptose biosynthesis; ADP-L-glycero-beta-D-manno-heptose from D-glycero-beta-D-manno-heptose 7-phosphate: step 4/4. Its function is as follows. Catalyzes the interconversion between ADP-D-glycero-beta-D-manno-heptose and ADP-L-glycero-beta-D-manno-heptose via an epimerization at carbon 6 of the heptose. The protein is ADP-L-glycero-D-manno-heptose-6-epimerase of Bordetella petrii (strain ATCC BAA-461 / DSM 12804 / CCUG 43448).